Here is a 263-residue protein sequence, read N- to C-terminus: Putative replication protein PDa0002 (263 aa).

The polypeptide is Putative replication protein PDa0002 (Xylella fastidiosa (strain Temecula1 / ATCC 700964)).